Here is a 101-residue protein sequence, read N- to C-terminus: MYAIVKTGGKQYKVAEGDLVKVEKIEGEPGSSVALTPVLLVDGATVKSKAADLEKVSVSAEIVEQGKGPKIDILKYKNKTGYKRRLGHRQPVTTLKITGIK.

This sequence belongs to the bacterial ribosomal protein bL21 family. Part of the 50S ribosomal subunit. Contacts protein L20.

Its function is as follows. This protein binds to 23S rRNA in the presence of protein L20. This Corynebacterium aurimucosum (strain ATCC 700975 / DSM 44827 / CIP 107346 / CN-1) (Corynebacterium nigricans) protein is Large ribosomal subunit protein bL21.